The following is a 155-amino-acid chain: Small ribosomal subunit protein uS7 (155 aa).

The protein belongs to the universal ribosomal protein uS7 family. As to quaternary structure, part of the 30S ribosomal subunit. Contacts proteins S9 and S11.

Functionally, one of the primary rRNA binding proteins, it binds directly to 16S rRNA where it nucleates assembly of the head domain of the 30S subunit. Is located at the subunit interface close to the decoding center, probably blocks exit of the E-site tRNA. The polypeptide is Small ribosomal subunit protein uS7 (Thermotoga neapolitana (strain ATCC 49049 / DSM 4359 / NBRC 107923 / NS-E)).